A 163-amino-acid polypeptide reads, in one-letter code: Phosphopantetheine adenylyltransferase (163 aa).

Substrate is bound at residue Thr11. Residues 11 to 12 (TF) and His19 each bind ATP. Substrate-binding residues include Lys43, Leu75, and Arg89. Residues 90–92 (GLR), Glu100, and 125–131 (YSFISST) each bind ATP.

It belongs to the bacterial CoaD family. As to quaternary structure, homohexamer. The cofactor is Mg(2+).

Its subcellular location is the cytoplasm. It carries out the reaction (R)-4'-phosphopantetheine + ATP + H(+) = 3'-dephospho-CoA + diphosphate. It participates in cofactor biosynthesis; coenzyme A biosynthesis; CoA from (R)-pantothenate: step 4/5. Reversibly transfers an adenylyl group from ATP to 4'-phosphopantetheine, yielding dephospho-CoA (dPCoA) and pyrophosphate. The sequence is that of Phosphopantetheine adenylyltransferase from Acinetobacter baumannii (strain ACICU).